The following is a 495-amino-acid chain: RTALQSGIDKLADAVGLTLGPRGRNVVLDEFGSPKVVNEGVTIARAIELPDPMENAGAALIREVASKTNDSAGDGTTTASVLAREIIKLGLLSVTSGANPVSIKRGIDKTVQGLIEELEKKARPVKGRDDIKAVASISAGNDELIGTMIADAIDKVGPDGVLSIESSSSFETTVEVEEGMEIDRGYISPQFVTNPEKLICEFENARVLVTDQKITAIKDIIPLLEKTTQLRAPLLIIAEDVTGEALATLVVNKMRGILNVAAIKAPGFGERRKALLQDIAILTGAEFQASDLGLLVENTSVEQLGIARKVTITKDSTTLIADAASKDELQARIAQLKRELAETDSVYDSEKLAERIAKLSGGVAVIKVGAATETELEDRKLRIEDAKNATFAAIEEGIVPGGGAALVHLSTVVPAINGEDKDADERLGADILQKALVAPASLIAQNAGIEGEVVVEKVKAREWEIGYNAMTDKYENLVEAGVIDPAKVTRCALQN.

It belongs to the chaperonin (HSP60) family. In terms of assembly, oligomer of probably six alpha and six beta subunits.

The protein localises to the plastid. The protein resides in the chloroplast. In terms of biological role, this protein binds RuBisCO small and large subunits and is implicated in the assembly of the enzyme oligomer. This Ricinus communis (Castor bean) protein is RuBisCO large subunit-binding protein subunit alpha.